A 750-amino-acid polypeptide reads, in one-letter code: Photosystem I P700 chlorophyll a apoprotein A1 (750 aa).

The next 8 helical transmembrane spans lie at Val-70 to Ala-93, Leu-156 to His-179, Leu-195 to Leu-219, Ile-291 to Tyr-309, Trp-346 to Tyr-369, Leu-385 to Val-411, Ala-433 to His-455, and Phe-531 to Leu-549. [4Fe-4S] cluster contacts are provided by Cys-573 and Cys-582. 2 helical membrane passes run His-589–Trp-610 and Leu-664–Phe-686. His-675 is a binding site for chlorophyll a'. Positions 683 and 691 each coordinate chlorophyll a. Residue Trp-692 coordinates phylloquinone. Residues Ala-724 to Ala-744 traverse the membrane as a helical segment.

This sequence belongs to the PsaA/PsaB family. In terms of assembly, the PsaA/B heterodimer binds the P700 chlorophyll special pair and subsequent electron acceptors. PSI consists of a core antenna complex that captures photons, and an electron transfer chain that converts photonic excitation into a charge separation. The eukaryotic PSI reaction center is composed of at least 11 subunits. P700 is a chlorophyll a/chlorophyll a' dimer, A0 is one or more chlorophyll a, A1 is one or both phylloquinones and FX is a shared 4Fe-4S iron-sulfur center. is required as a cofactor.

The protein localises to the plastid. Its subcellular location is the chloroplast thylakoid membrane. The catalysed reaction is reduced [plastocyanin] + hnu + oxidized [2Fe-2S]-[ferredoxin] = oxidized [plastocyanin] + reduced [2Fe-2S]-[ferredoxin]. In terms of biological role, psaA and PsaB bind P700, the primary electron donor of photosystem I (PSI), as well as the electron acceptors A0, A1 and FX. PSI is a plastocyanin-ferredoxin oxidoreductase, converting photonic excitation into a charge separation, which transfers an electron from the donor P700 chlorophyll pair to the spectroscopically characterized acceptors A0, A1, FX, FA and FB in turn. Oxidized P700 is reduced on the lumenal side of the thylakoid membrane by plastocyanin. The chain is Photosystem I P700 chlorophyll a apoprotein A1 from Coffea arabica (Arabian coffee).